We begin with the raw amino-acid sequence, 599 residues long: Aspartate--tRNA(Asp/Asn) ligase (599 aa).

E174 is an L-aspartate binding site. Residues 198 to 201 (QLFK) are aspartate. L-aspartate is bound at residue R220. Residues 220–222 (RDE) and Q229 contribute to the ATP site. H457 is a binding site for L-aspartate. Position 491 (E491) interacts with ATP. R498 serves as a coordination point for L-aspartate. 543–546 (GLDR) contributes to the ATP binding site.

This sequence belongs to the class-II aminoacyl-tRNA synthetase family. Type 1 subfamily. In terms of assembly, homodimer.

It is found in the cytoplasm. The catalysed reaction is tRNA(Asx) + L-aspartate + ATP = L-aspartyl-tRNA(Asx) + AMP + diphosphate. In terms of biological role, aspartyl-tRNA synthetase with relaxed tRNA specificity since it is able to aspartylate not only its cognate tRNA(Asp) but also tRNA(Asn). Reaction proceeds in two steps: L-aspartate is first activated by ATP to form Asp-AMP and then transferred to the acceptor end of tRNA(Asp/Asn). This chain is Aspartate--tRNA(Asp/Asn) ligase, found in Paraburkholderia phymatum (strain DSM 17167 / CIP 108236 / LMG 21445 / STM815) (Burkholderia phymatum).